The primary structure comprises 3119 residues: Huntingtin (3119 aa).

The segment at 1 to 65 is disordered; the sequence is MATLEKLMKA…LPGPAEEPLH (65 aa). Residue lysine 9 is modified to N6-acetyllysine. Residues 24–60 show a composition bias toward pro residues; that stretch reads QPPPQAPPPPPPPPPQPPQPPPQGQPPPPPPPLPGPA. Lysine 155 and lysine 213 each carry N6-acetyllysine. HEAT repeat units follow at residues 183 to 220 and 225 to 262; these read PYLV…SFGN and NEIK…HSRR. N6-acetyllysine is present on lysine 322. A phosphoserine mark is found at serine 396, serine 398, and serine 411. Position 421 is an N6-acetyllysine (lysine 421). The segment at 470–481 is interaction with ZDHHC17; that stretch reads GHDIITEQPRSQ. The disordered stretch occupies residues 495–558; the sequence is DLTSAATDGD…DSAVTPSDSS (64 aa). Over residues 529 to 558 the composition is skewed to polar residues; the sequence is DGTQASSPISDSSQTTTEGPDSAVTPSDSS. The N-myristoyl glycine moiety is linked to residue glycine 530. A phosphoserine mark is found at serine 620 and serine 623. HEAT repeat units follow at residues 782–819 and 882–920; these read FSLV…SLCS and KLQE…KLFY. Residues 1146 to 1204 form a disordered region; it reads KAALPSLTNPPSLSPIRRKGKEKEPGEQASTPMSPKKVGEASAASRQSDTSGPVTASKS. Low complexity predominate over residues 1149 to 1160; the sequence is LPSLTNPPSLSP. Serine 1159 and serine 1179 each carry phosphoserine; by CDK5. Residues 1189–1204 are compositionally biased toward polar residues; the sequence is ASRQSDTSGPVTASKS. The HEAT 5 repeat unit spans residues 1404-1441; it reads LFEPLVIKALKQYTTTTSVQLQKQVLDLLAQLVQLRVN. The residue at position 1853 (serine 1853) is a Phosphoserine. A Nuclear export signal motif is present at residues 2372 to 2381; sequence IVISLARLPL. The segment at 2610–2637 is disordered; it reads EEEWDEEEEEESDVPAPTSPPVSPVNSR. A compositionally biased stretch (acidic residues) spans 2611–2622; it reads EEWDEEEEEESD.

It belongs to the huntingtin family. In terms of assembly, interacts with PFN1. Interacts through its N-terminus with PRPF40A. Interacts with PQBP1. Interacts with SETD2. Interacts with SH3GLB1. Interacts with SYVN. Interacts with TPR; the interaction is inhibited by forms of Huntingtin with expanded polyglutamine stretch. Interacts with ZDHHC13 (via ANK repeats). Interacts with ZDHHC17 (via ANK repeats). Interacts with F8A1/F8A2/F8A3. Found in a complex with F8A1/F8A2/F8A3, HTT and RAB5A; mediates the recruitment of HTT by RAB5A. In terms of processing, phosphorylation at Ser-1159 and Ser-1179 by CDK5 in response to DNA damage in nuclei of neurons protects neurons against polyglutamine expansion as well as DNA damage mediated toxicity. Post-translationally, cleaved by caspases downstream of the polyglutamine stretch. Myristoylated at Gly-530, following proteolytic cleavage at Asp-529. In terms of tissue distribution, the highest level is seen throughout the brain, but it is also found in the stomach, heart, testis, adipose tissue, muscle, spleen, liver, and kidney.

The protein resides in the cytoplasm. Its subcellular location is the nucleus. It localises to the cytoplasmic vesicle. The protein localises to the autophagosome. Functionally, may play a role in microtubule-mediated transport or vesicle function. Promotes the formation of autophagic vesicles. The chain is Huntingtin (Htt) from Mus musculus (Mouse).